Reading from the N-terminus, the 374-residue chain is UDP-N-acetylglucosamine--N-acetylmuramyl-(pentapeptide) pyrophosphoryl-undecaprenol N-acetylglucosamine transferase (374 aa).

UDP-N-acetyl-alpha-D-glucosamine-binding positions include 13–15, N124, R165, S193, and Q294; that span reads TGG.

This sequence belongs to the glycosyltransferase 28 family. MurG subfamily.

It localises to the cell inner membrane. It catalyses the reaction di-trans,octa-cis-undecaprenyl diphospho-N-acetyl-alpha-D-muramoyl-L-alanyl-D-glutamyl-meso-2,6-diaminopimeloyl-D-alanyl-D-alanine + UDP-N-acetyl-alpha-D-glucosamine = di-trans,octa-cis-undecaprenyl diphospho-[N-acetyl-alpha-D-glucosaminyl-(1-&gt;4)]-N-acetyl-alpha-D-muramoyl-L-alanyl-D-glutamyl-meso-2,6-diaminopimeloyl-D-alanyl-D-alanine + UDP + H(+). The protein operates within cell wall biogenesis; peptidoglycan biosynthesis. In terms of biological role, cell wall formation. Catalyzes the transfer of a GlcNAc subunit on undecaprenyl-pyrophosphoryl-MurNAc-pentapeptide (lipid intermediate I) to form undecaprenyl-pyrophosphoryl-MurNAc-(pentapeptide)GlcNAc (lipid intermediate II). This Rhizobium johnstonii (strain DSM 114642 / LMG 32736 / 3841) (Rhizobium leguminosarum bv. viciae) protein is UDP-N-acetylglucosamine--N-acetylmuramyl-(pentapeptide) pyrophosphoryl-undecaprenol N-acetylglucosamine transferase.